The sequence spans 474 residues: Eukaryotic translation initiation factor 3 subunit L (474 aa).

The 195-residue stretch at 255 to 449 (DAIRMFSHIL…DLDYALQGDL (195 aa)) folds into the PCI domain.

It belongs to the eIF-3 subunit L family. Component of the eukaryotic translation initiation factor 3 (eIF-3) complex.

The protein resides in the cytoplasm. Its function is as follows. Component of the eukaryotic translation initiation factor 3 (eIF-3) complex, which is involved in protein synthesis of a specialized repertoire of mRNAs and, together with other initiation factors, stimulates binding of mRNA and methionyl-tRNAi to the 40S ribosome. The eIF-3 complex specifically targets and initiates translation of a subset of mRNAs involved in cell proliferation. This chain is Eukaryotic translation initiation factor 3 subunit L, found in Chaetomium globosum (strain ATCC 6205 / CBS 148.51 / DSM 1962 / NBRC 6347 / NRRL 1970) (Soil fungus).